The chain runs to 212 residues: MAIGLIGRKVGMTRIFAEDGVSIPVTVIEIASNRVTQVKTLETDGYRALQVTTGTKKANRITKPEAGHFAKAGVEAGRGLWEVRLADGEGESIEVGAELNVDIFADVAKVDVTGQSKGKGFQGGIKRWNFHAQDMTHGNSLAHRSNGSIGQNQTPGRVFKGKKMSGHMGAERVTTQNLDVVRVDAERNLLLVKGAVPGATNGNLIIKPAVKA.

Gln153 is modified (N5-methylglutamine).

It belongs to the universal ribosomal protein uL3 family. As to quaternary structure, part of the 50S ribosomal subunit. Forms a cluster with proteins L14 and L19. Methylated by PrmB.

In terms of biological role, one of the primary rRNA binding proteins, it binds directly near the 3'-end of the 23S rRNA, where it nucleates assembly of the 50S subunit. This Shewanella sediminis (strain HAW-EB3) protein is Large ribosomal subunit protein uL3.